The following is a 217-amino-acid chain: UPF0502 protein ASA_1460 (217 aa).

It belongs to the UPF0502 family.

The chain is UPF0502 protein ASA_1460 from Aeromonas salmonicida (strain A449).